Consider the following 316-residue polypeptide: Cyclin-dependent kinase inhibitor 1C (316 aa).

R107 bears the Omega-N-methylarginine mark. Residues 124–153 (ESLDGLEEAPEQLPSVPVPAPASTPPPVPV) are disordered. Pro residues predominate over residues 139 to 153 (VPVPAPASTPPPVPV). 9 tandem repeats follow at residues 156–159 (PAPA), 160–163 (PAPA), 180–183 (PAPA), 184–187 (PAPA), 188–191 (PAPA), 198–201 (PAPA), 202–205 (PAPA), 206–209 (PAPA), and 210–213 (PAPA). The interval 156-213 (PAPAPAPAPVAAPVAAPVAVAVLAPAPAPAPAPAPAPAPVAAPAPAPAPAPAPAPAPA) is 9 X 4 AA repeats of P-A-P-A. The segment covering 181-217 (APAPAPAPAPAPAPVAAPAPAPAPAPAPAPAPAPAPD) has biased composition (pro residues). Residues 181–260 (APAPAPAPAP…AAGTAAASAN (80 aa)) form a disordered region. Residues 223–233 (SAEQGANQGQR) show a composition bias toward polar residues. Residues 251–260 (AAGTAAASAN) show a composition bias toward low complexity. S268 carries the phosphoserine modification. A Nuclear localization signal motif is present at residues 278–281 (KRKR). The interval 278-316 (KRKRSAPEKSSGDVPAPCPSPSAAPGVGSVEQTPRKRLR) is disordered.

It belongs to the CDI family. Interacts with PCNA. As to expression, expressed in the heart, brain, lung, skeletal muscle, kidney, pancreas and testis. Expressed in the eye. High levels are seen in the placenta while low levels are seen in the liver.

The protein localises to the nucleus. Functionally, potent tight-binding inhibitor of several G1 cyclin/CDK complexes (cyclin E-CDK2, cyclin D2-CDK4, and cyclin A-CDK2) and, to lesser extent, of the mitotic cyclin B-CDC2. Negative regulator of cell proliferation. May play a role in maintenance of the non-proliferative state throughout life. This chain is Cyclin-dependent kinase inhibitor 1C (CDKN1C), found in Homo sapiens (Human).